The following is a 472-amino-acid chain: Serine/threonine-protein kinase ULK3 (472 aa).

Positions 14 to 270 (FILTERLGSG…FQDFFAHPWV (257 aa)) constitute a Protein kinase domain. Residues 20–28 (LGSGTYATV) and lysine 44 contribute to the ATP site. The active-site Proton acceptor is the aspartate 137. Position 176 is a phosphoserine (serine 176). The MIT 1 domain occupies 281–347 (LAQATALVVE…VSRAEELKAI (67 aa)). Phosphoserine; by autocatalysis is present on residues serine 350 and serine 384. The MIT 2 domain occupies 376–444 (LLAALEVASA…ARAEYLKEQI (69 aa)). Serine 464 is subject to Phosphoserine.

This sequence belongs to the protein kinase superfamily. Ser/Thr protein kinase family. APG1/unc-51/ULK1 subfamily. In terms of assembly, interacts (via protein kinase domain) with SUFU. Post-translationally, autophosphorylated. Autophosphorylation is blocked by interaction with SUFU.

It is found in the cytoplasm. It carries out the reaction L-seryl-[protein] + ATP = O-phospho-L-seryl-[protein] + ADP + H(+). It catalyses the reaction L-threonyl-[protein] + ATP = O-phospho-L-threonyl-[protein] + ADP + H(+). Its function is as follows. Serine/threonine protein kinase that acts as a regulator of Sonic hedgehog (SHH) signaling and autophagy. Acts as a negative regulator of SHH signaling in the absence of SHH ligand: interacts with SUFU, thereby inactivating the protein kinase activity and preventing phosphorylation of GLI proteins (GLI1, GLI2 and/or GLI3). Positively regulates SHH signaling in the presence of SHH: dissociates from SUFU, autophosphorylates and mediates phosphorylation of GLI2, activating it and promoting its nuclear translocation. Phosphorylates in vitro GLI2, as well as GLI1 and GLI3, although less efficiently. Also acts as a regulator of autophagy: following cellular senescence, able to induce autophagy. This is Serine/threonine-protein kinase ULK3 (Ulk3) from Rattus norvegicus (Rat).